We begin with the raw amino-acid sequence, 134 residues long: MAEVIGYYGTGRRKTAVARVYLRPGEGKVKVNGKEYESLNDYFKNPAWTKHAIEPLEVTNTLGKFDLVIRVNGGGLSGQSGAVRLGIARALLQYDQKLRPVLKKYKMLTRDPREVERKKYGLKKARRAPQFSKR.

Positions 113–134 (REVERKKYGLKKARRAPQFSKR) are disordered. Residues 120 to 134 (YGLKKARRAPQFSKR) show a composition bias toward basic residues.

Belongs to the universal ribosomal protein uS9 family.

The polypeptide is Small ribosomal subunit protein uS9 (Thermotoga petrophila (strain ATCC BAA-488 / DSM 13995 / JCM 10881 / RKU-1)).